The following is a 130-amino-acid chain: S-adenosylmethionine decarboxylase proenzyme (130 aa).

Residue Ser63 is the Schiff-base intermediate with substrate; via pyruvic acid of the active site. The residue at position 63 (Ser63) is a Pyruvic acid (Ser); by autocatalysis. His68 functions as the Proton acceptor; for processing activity in the catalytic mechanism. The active-site Proton donor; for catalytic activity is Cys83.

This sequence belongs to the prokaryotic AdoMetDC family. Type 1 subfamily. Heterotetramer of two alpha and two beta chains arranged as a dimer of alpha/beta heterodimers. It depends on pyruvate as a cofactor. Post-translationally, is synthesized initially as an inactive proenzyme. Formation of the active enzyme involves a self-maturation process in which the active site pyruvoyl group is generated from an internal serine residue via an autocatalytic post-translational modification. Two non-identical subunits are generated from the proenzyme in this reaction, and the pyruvate is formed at the N-terminus of the alpha chain, which is derived from the carboxyl end of the proenzyme. The post-translation cleavage follows an unusual pathway, termed non-hydrolytic serinolysis, in which the side chain hydroxyl group of the serine supplies its oxygen atom to form the C-terminus of the beta chain, while the remainder of the serine residue undergoes an oxidative deamination to produce ammonia and the pyruvoyl group blocking the N-terminus of the alpha chain.

It carries out the reaction S-adenosyl-L-methionine + H(+) = S-adenosyl 3-(methylsulfanyl)propylamine + CO2. Its pathway is amine and polyamine biosynthesis; S-adenosylmethioninamine biosynthesis; S-adenosylmethioninamine from S-adenosyl-L-methionine: step 1/1. Catalyzes the decarboxylation of S-adenosylmethionine to S-adenosylmethioninamine (dcAdoMet), the propylamine donor required for the synthesis of the polyamines spermine and spermidine from the diamine putrescine. The sequence is that of S-adenosylmethionine decarboxylase proenzyme (speH) from Thermotoga maritima (strain ATCC 43589 / DSM 3109 / JCM 10099 / NBRC 100826 / MSB8).